Here is a 126-residue protein sequence, read N- to C-terminus: Small ribosomal subunit protein uS13 (126 aa).

Residues 95 to 126 form a disordered region; that stretch reads NLPVHGQRTHTNARTRKGPRRAIAGKKKAGKK.

This sequence belongs to the universal ribosomal protein uS13 family. As to quaternary structure, part of the 30S ribosomal subunit. Forms a loose heterodimer with protein S19. Forms two bridges to the 50S subunit in the 70S ribosome.

Its function is as follows. Located at the top of the head of the 30S subunit, it contacts several helices of the 16S rRNA. In the 70S ribosome it contacts the 23S rRNA (bridge B1a) and protein L5 of the 50S subunit (bridge B1b), connecting the 2 subunits; these bridges are implicated in subunit movement. Contacts the tRNAs in the A and P-sites. The chain is Small ribosomal subunit protein uS13 from Frankia casuarinae (strain DSM 45818 / CECT 9043 / HFP020203 / CcI3).